Reading from the N-terminus, the 180-residue chain is Large ribosomal subunit protein uL5 (180 aa).

It belongs to the universal ribosomal protein uL5 family. In terms of assembly, part of the 50S ribosomal subunit; part of the 5S rRNA/L5/L18/L25 subcomplex. Contacts the 5S rRNA and the P site tRNA. Forms a bridge to the 30S subunit in the 70S ribosome.

In terms of biological role, this is one of the proteins that bind and probably mediate the attachment of the 5S RNA into the large ribosomal subunit, where it forms part of the central protuberance. In the 70S ribosome it contacts protein S13 of the 30S subunit (bridge B1b), connecting the 2 subunits; this bridge is implicated in subunit movement. Contacts the P site tRNA; the 5S rRNA and some of its associated proteins might help stabilize positioning of ribosome-bound tRNAs. The chain is Large ribosomal subunit protein uL5 from Streptococcus pyogenes serotype M49 (strain NZ131).